We begin with the raw amino-acid sequence, 142 residues long: Large ribosomal subunit protein uL11 (142 aa).

The protein belongs to the universal ribosomal protein uL11 family. As to quaternary structure, part of the ribosomal stalk of the 50S ribosomal subunit. Interacts with L10 and the large rRNA to form the base of the stalk. L10 forms an elongated spine to which L12 dimers bind in a sequential fashion forming a multimeric L10(L12)X complex. Post-translationally, one or more lysine residues are methylated.

Its function is as follows. Forms part of the ribosomal stalk which helps the ribosome interact with GTP-bound translation factors. The sequence is that of Large ribosomal subunit protein uL11 from Dichelobacter nodosus (strain VCS1703A).